Consider the following 571-residue polypeptide: uncharacterized protein (571 aa).

The next 5 membrane-spanning stretches (helical) occupy residues valine 10–glycine 29, valine 36–phenylalanine 55, tryptophan 65–leucine 87, alanine 96–phenylalanine 118, and alanine 166–leucine 188. Residues threonine 294–phenylalanine 378 enclose the RCK C-terminal domain. A run of 6 helical transmembrane segments spans residues leucine 388–valine 406, valine 411–serine 433, leucine 446–alanine 465, leucine 480–leucine 502, leucine 509–leucine 531, and valine 546–alanine 568.

The protein belongs to the AAE transporter (TC 2.A.81) family.

It localises to the cell membrane. This is an uncharacterized protein from Bordetella parapertussis (strain 12822 / ATCC BAA-587 / NCTC 13253).